We begin with the raw amino-acid sequence, 193 residues long: Xanthine phosphoribosyltransferase (193 aa).

Xanthine is bound by residues Leu20 and Thr27. 128-132 (ANGQA) provides a ligand contact to 5-phospho-alpha-D-ribose 1-diphosphate. Lys156 contacts xanthine.

This sequence belongs to the purine/pyrimidine phosphoribosyltransferase family. Xpt subfamily. In terms of assembly, homodimer.

It localises to the cytoplasm. The enzyme catalyses XMP + diphosphate = xanthine + 5-phospho-alpha-D-ribose 1-diphosphate. Its pathway is purine metabolism; XMP biosynthesis via salvage pathway; XMP from xanthine: step 1/1. Converts the preformed base xanthine, a product of nucleic acid breakdown, to xanthosine 5'-monophosphate (XMP), so it can be reused for RNA or DNA synthesis. This chain is Xanthine phosphoribosyltransferase, found in Streptococcus pneumoniae (strain CGSP14).